The following is a 352-amino-acid chain: Cyclin-dependent kinase-like 1 (352 aa).

The region spanning 4 to 287 (YEKIGKIGEG…CEQLLQHPYF (284 aa)) is the Protein kinase domain. ATP is bound by residues 10-18 (IGEGSYGVV) and Lys33. The [NKR]KIAxRE signature appears at 45–51 (KKIALRE). Asp126 (proton acceptor) is an active-site residue.

This sequence belongs to the protein kinase superfamily. CMGC Ser/Thr protein kinase family. CDC2/CDKX subfamily.

It is found in the cytoplasm. The protein localises to the nucleus. The catalysed reaction is L-seryl-[protein] + ATP = O-phospho-L-seryl-[protein] + ADP + H(+). It carries out the reaction L-threonyl-[protein] + ATP = O-phospho-L-threonyl-[protein] + ADP + H(+). This Mus musculus (Mouse) protein is Cyclin-dependent kinase-like 1.